A 521-amino-acid polypeptide reads, in one-letter code: Amidase 1 (521 aa).

Residues Lys-112 and Ser-187 each act as charge relay system in the active site. Substrate is bound by residues Ser-187 and 208-211 (IGGS). Ser-211 (acyl-ester intermediate) is an active-site residue.

It belongs to the amidase family.

It catalyses the reaction a monocarboxylic acid amide + H2O = a monocarboxylate + NH4(+). Its pathway is xenobiotic degradation. Amidase; part of the Fusarium detoxification of benzoxazolinone cluster 1 (FDB1) involved in the degradation of benzoxazolinones produced by the host plant. Maize, wheat, and rye produce the 2 benzoxazinone phytoanticipins 2,4-dihy-droxy-7-methoxy-1,4-benzoxazin-3-one (DIMBOA) and 2,4-dihydroxy-1,4-benzoxazin-3-one (DIBOA) that, due to their inherent instability once released, spontaneously degrade to the more stable corresponding benzoxazolinones, 6-methoxy-2-benzoxazolinone (MBOA) and 2-benzoxazolinone (BOA), respectively. The first step in the detoxification of benzoxazolinones involves the hydrolysis of the cyclic ester bond of benzoxazolinones by the FDB1 cluster gamma-lactamase MBL1 to aminophenols. MBL1 is able to convert BOA into 2-aminophenol (2-AP), as well as MBOA into 5-methoxy-2-aminophenol (2-AMP). The FDB2 cluster N-malonyltransferase FDB2/NAT1 then metabolizes aminophenols via N-malonylation to non-toxic malonamic acids. FDB2/NAT1 converts 2-AP into N-(2-hydroxyphenyl) malonamic acid (HPMA) and 2-AMP into N-(2-hydroxy-4-methoxyphenyl) malonamic acid (HMPMA). The duplicated dienlactone hydrolases DLH1 and DLH2 may provide redundant function for hydrolyzing the lactone moiety in the BOA molecule. The roles of the amidases an other enzymes encoded by the 2 FDB clusters have not been identified so far. In Gibberella moniliformis (strain M3125 / FGSC 7600) (Maize ear and stalk rot fungus), this protein is Amidase 1.